Reading from the N-terminus, the 349-residue chain is Interleukin-10 receptor subunit beta (349 aa).

The signal sequence occupies residues Met-1–Gly-19. Residues Met-20–Ser-220 lie on the Extracellular side of the membrane. Fibronectin type-III domains are found at residues Pro-23–Thr-111 and Ile-112–Asp-215. A glycan (N-linked (GlcNAc...) asparagine) is linked at Asn-49. Cysteines 66 and 74 form a disulfide. Residues Asn-102, Asn-161, and Asn-199 are each glycosylated (N-linked (GlcNAc...) asparagine). Cys-188 and Cys-209 are disulfide-bonded. The chain crosses the membrane as a helical span at residues Trp-221–Cys-241. The Cytoplasmic segment spans residues Phe-242–Val-349. Ser-299 is modified (phosphoserine). The disordered stretch occupies residues Glu-300–Val-349. Positions Gly-322–Lys-341 are enriched in basic and acidic residues.

Belongs to the type II cytokine receptor family. As to quaternary structure, heterodimer with IFNLR1.

The protein resides in the membrane. In terms of biological role, shared cell surface receptor required for the activation of five class 2 cytokines: IL10, IL22, IL26, IL28, and IFNL1. The IFNLR1/IL10RB dimer is a receptor for the cytokine ligands IFNL2 and IFNL3 and mediates their antiviral activity. The ligand/receptor complex stimulate the activation of the JAK/STAT signaling pathway leading to the expression of IFN-stimulated genes (ISG), which contribute to the antiviral state. The protein is Interleukin-10 receptor subunit beta (Il10rb) of Mus musculus (Mouse).